The sequence spans 292 residues: Acetylglutamate kinase (292 aa).

Substrate-binding positions include 64-65 (GG), Arg86, and Asn190.

The protein belongs to the acetylglutamate kinase family. ArgB subfamily.

It is found in the cytoplasm. The enzyme catalyses N-acetyl-L-glutamate + ATP = N-acetyl-L-glutamyl 5-phosphate + ADP. The protein operates within amino-acid biosynthesis; L-arginine biosynthesis; N(2)-acetyl-L-ornithine from L-glutamate: step 2/4. In terms of biological role, catalyzes the ATP-dependent phosphorylation of N-acetyl-L-glutamate. This chain is Acetylglutamate kinase, found in Geotalea daltonii (strain DSM 22248 / JCM 15807 / FRC-32) (Geobacter daltonii).